The following is a 233-amino-acid chain: Riboflavin kinase (233 aa).

The segment at 1 to 104 (MVRDIKTFKF…YKKIFDDEGT (104 aa)) is H-T-H motif-like. The interval 105-233 (IKIKGEVFSG…GDFVEVEVIL (129 aa)) is riboflavin kinase. 114–119 (GVGEGR) provides a ligand contact to CDP. Mg(2+) contacts are provided by T143 and N145. FMN contacts are provided by T200 and E208. Position 213-216 (213-216 (VKLR)) interacts with CDP.

It belongs to the archaeal riboflavin kinase family. Mg(2+) serves as cofactor.

The catalysed reaction is riboflavin + CTP = CDP + FMN + H(+). Its pathway is cofactor biosynthesis; FMN biosynthesis; FMN from riboflavin (CTP route): step 1/1. In terms of biological role, catalyzes the CTP-dependent phosphorylation of riboflavin (vitamin B2) to form flavin mononucleotide (FMN). The protein is Riboflavin kinase (ribK) of Archaeoglobus fulgidus (strain ATCC 49558 / DSM 4304 / JCM 9628 / NBRC 100126 / VC-16).